The following is a 154-amino-acid chain: Phospholipase A2 OS1 (154 aa).

An N-terminal signal peptide occupies residues 1-27 (MHPAHLLVLLAVCVSLLGAARIPPLPL). Intrachain disulfides connect Cys-38–Cys-104, Cys-54–Cys-153, Cys-56–Cys-72, Cys-71–Cys-132, Cys-78–Cys-125, Cys-88–Cys-118, and Cys-111–Cys-123. Positions 57 and 59 each coordinate Ca(2+). His-75 is an active-site residue. Asp-76 contacts Ca(2+). Residue Asp-126 is part of the active site.

This sequence belongs to the phospholipase A2 family. Group I subfamily. D49 sub-subfamily. In terms of assembly, monomer. Requires Ca(2+) as cofactor. Expressed by the venom gland.

It localises to the secreted. It catalyses the reaction a 1,2-diacyl-sn-glycero-3-phosphocholine + H2O = a 1-acyl-sn-glycero-3-phosphocholine + a fatty acid + H(+). Its function is as follows. Snake venom phospholipase A2 (PLA2) that has a low specific activity on phospholipid substrates, and is neither neurotoxic, nor myotoxic. Induces endothelial cell migration which is mediated, at least in part, by its hydrolytic products. Shows antimalarial activity, but is not able to potently inhibit HIV-1 replication. Binds in a calcium-independent fashion with very high affinity to a muscle-type (M-type) PLA2 receptor, but is a very poor ligand for neuronal-type (N-type) receptors. PLA2 catalyzes the calcium-dependent hydrolysis of the 2-acyl groups in 3-sn-phosphoglycerides. The chain is Phospholipase A2 OS1 from Oxyuranus scutellatus scutellatus (Australian taipan).